The sequence spans 140 residues: Nucleoside diphosphate kinase (140 aa).

Positions 11, 59, 87, 93, 104, and 114 each coordinate ATP. The Pros-phosphohistidine intermediate role is filled by H117.

Belongs to the NDK family. In terms of assembly, homotetramer. It depends on Mg(2+) as a cofactor.

Its subcellular location is the cytoplasm. It catalyses the reaction a 2'-deoxyribonucleoside 5'-diphosphate + ATP = a 2'-deoxyribonucleoside 5'-triphosphate + ADP. The catalysed reaction is a ribonucleoside 5'-diphosphate + ATP = a ribonucleoside 5'-triphosphate + ADP. Its function is as follows. Major role in the synthesis of nucleoside triphosphates other than ATP. The ATP gamma phosphate is transferred to the NDP beta phosphate via a ping-pong mechanism, using a phosphorylated active-site intermediate. The protein is Nucleoside diphosphate kinase of Rhodopseudomonas palustris (strain BisA53).